The primary structure comprises 359 residues: D-alanine--D-alanine ligase (359 aa).

Residues 141–346 (KRIFKEAGLP…YSTLLDELIN (206 aa)) form the ATP-grasp domain. Residue 172 to 227 (IEHLGYPCFVKPANLGSSVGITKVHNEEELPGALKLAAKYDRKLLIERGIDAREIE) participates in ATP binding. Asp299, Glu313, and Asn315 together coordinate Mg(2+).

The protein belongs to the D-alanine--D-alanine ligase family. It depends on Mg(2+) as a cofactor. Mn(2+) serves as cofactor.

Its subcellular location is the cytoplasm. It catalyses the reaction 2 D-alanine + ATP = D-alanyl-D-alanine + ADP + phosphate + H(+). It functions in the pathway cell wall biogenesis; peptidoglycan biosynthesis. Cell wall formation. This Thermoanaerobacter pseudethanolicus (strain ATCC 33223 / 39E) (Clostridium thermohydrosulfuricum) protein is D-alanine--D-alanine ligase.